The sequence spans 242 residues: MIVFPAIDLKGGEVVRLAEGDMDRATVYGDNPAAQAMLFAEAGAEHLHVVDLDGAFAGESRNREAVEAIVAEFPGYVQLGGGIRDATAVEGWFNLGVARIVIGSAALKDPDFVKEMAREWENGIVVAVDARDGMIATEGWAEVSDVPVADMARRFEDAGVASLLFTDIGRDGLLKGCNIDATVELARQTDMPVIASGGVKGLDDIHVLSLHAHEGIEGVITGRALYEGRLDLAAAIAMGARS.

The Proton acceptor role is filled by Asp8. The Proton donor role is filled by Asp129.

Belongs to the HisA/HisF family.

Its subcellular location is the cytoplasm. It carries out the reaction 1-(5-phospho-beta-D-ribosyl)-5-[(5-phospho-beta-D-ribosylamino)methylideneamino]imidazole-4-carboxamide = 5-[(5-phospho-1-deoxy-D-ribulos-1-ylimino)methylamino]-1-(5-phospho-beta-D-ribosyl)imidazole-4-carboxamide. It participates in amino-acid biosynthesis; L-histidine biosynthesis; L-histidine from 5-phospho-alpha-D-ribose 1-diphosphate: step 4/9. This Erythrobacter litoralis (strain HTCC2594) protein is 1-(5-phosphoribosyl)-5-[(5-phosphoribosylamino)methylideneamino] imidazole-4-carboxamide isomerase.